The following is a 348-amino-acid chain: Mitochondrial glycine transporter (348 aa).

Solcar repeat units follow at residues 10–94 (TKST…IREN), 130–214 (LSNT…SKQH), and 249–333 (RAAS…LIRR). A run of 6 helical transmembrane segments spans residues 16 to 41 (FVAGLGSGVLSAILLQPIDLLKTRVQ), 69 to 95 (GTLPSALRTGFGSAIYFTTLNTIRENA), 136 to 161 (LLAGAVARSFAGFILMPLTVLKVRYE), 189 to 212 (GFGATAIRDAPYAGLYVLFYEKSK), 253 to 279 (INFASGVFSAIICSIISNPFDAVKTRI), and 308 to 326 (GLALRMSRKAMSSALAWTV).

The protein belongs to the mitochondrial carrier (TC 2.A.29) family. SLC25A38 subfamily.

Its subcellular location is the mitochondrion inner membrane. The catalysed reaction is glycine(in) = glycine(out). In terms of biological role, mitochondrial glycine transporter that imports glycine into the mitochondrial matrix. Plays an important role in providing glycine for the first enzymatic step in heme biosynthesis, the condensation of glycine with succinyl-CoA to produce 5-aminolevulinate (ALA) in the mitochondrial matrix. The chain is Mitochondrial glycine transporter (mic-13) from Neurospora crassa (strain ATCC 24698 / 74-OR23-1A / CBS 708.71 / DSM 1257 / FGSC 987).